Here is a 710-residue protein sequence, read N- to C-terminus: Secretin OutD (710 aa).

Positions 1–27 (MLGKGIKKSWGWLGLTVLLLGSPCGWA) are cleaved as a signal peptide. An N0 region spans residues 28-105 (AEFSASFKGT…DNGVLKVIRS (78 aa)). The segment at 123 to 190 (IGDELVTRVV…DIVNTVDKTG (68 aa)) is N1. The interval 192 to 262 (REMVTVPLTY…VEMIRQLDRK (71 aa)) is N2. The tract at residues 288–399 (GNGTSGNRNS…INQLDIRRPQ (112 aa)) is N3. A disordered region spans residues 289-353 (NGTSGNRNSS…AFGSTSSSGG (65 aa)). Residues 401-648 (LVEAIIAEIQ…MLFLRPTIIR (248 aa)) are secretin. Residues 691–710 (TYTFRQVQSSISDFYKPEGR) are s domain.

The protein belongs to the bacterial secretin family. GSP D subfamily. Forms a cylindrical channel with 15 subunits. Interacts with pilotin OutS.

It is found in the cell outer membrane. Its function is as follows. Involved in a type II secretion system (T2SS, formerly general secretion pathway, GSP) for the export of proteins. Required for the translocation of the multiple pectic enzymes. This subunit forms the outer membrane channel. This Dickeya dadantii (strain 3937) (Erwinia chrysanthemi (strain 3937)) protein is Secretin OutD (outD).